The primary structure comprises 145 residues: Large ribosomal subunit protein uL11 (145 aa).

It belongs to the universal ribosomal protein uL11 family. Part of the ribosomal stalk of the 50S ribosomal subunit. Interacts with L10 and the large rRNA to form the base of the stalk. L10 forms an elongated spine to which L12 dimers bind in a sequential fashion forming a multimeric L10(L12)X complex. One or more lysine residues are methylated.

Functionally, forms part of the ribosomal stalk which helps the ribosome interact with GTP-bound translation factors. This Persephonella marina (strain DSM 14350 / EX-H1) protein is Large ribosomal subunit protein uL11.